The chain runs to 1010 residues: Lethal(2) giant larvae protein homolog SRO77 (1010 aa).

WD repeat units lie at residues 47 to 80 (TVTT…VVFT), 87 to 122 (IKHM…TTVF), 127 to 163 (ITCI…KLKI), 182 to 215 (SIQW…KQHF), 240 to 275 (VIQS…IHAR), 299 to 364 (AIFK…QKLF), 372 to 407 (LINF…ETLI), 431 to 504 (VTTC…FEVN), 518 to 595 (KNIS…STVI), 602 to 637 (VSAI…FNEN), 649 to 700 (VSTV…DATK), 709 to 763 (GINS…THAL), 768 to 815 (IATS…KNLR), and 829 to 852 (SILE…SVLN). The disordered stretch occupies residues 932 to 958 (SNAARKLPPGTEDHRYARPVRSSGRSN).

Belongs to the WD repeat L(2)GL family. In terms of assembly, interacts with SEC9.

In terms of biological role, acts as an allosteric regulator of polarized exocytosis by promoting the targeted fusion of vesicles with the plasma membrane. Involved in maintenance of ion homeostasis in cells exposed to NaCl stress. May be involved in the targeting of the myosin proteins to their intrinsic pathways. Multicopy suppressor of RHO3. May also participate in the maintenance of cell polarity and bud growth. The sequence is that of Lethal(2) giant larvae protein homolog SRO77 (SRO77) from Saccharomyces cerevisiae (strain ATCC 204508 / S288c) (Baker's yeast).